The sequence spans 273 residues: Urease accessory protein UreD (273 aa).

It belongs to the UreD family. In terms of assembly, ureD, UreF and UreG form a complex that acts as a GTP-hydrolysis-dependent molecular chaperone, activating the urease apoprotein by helping to assemble the nickel containing metallocenter of UreC. The UreE protein probably delivers the nickel.

The protein localises to the cytoplasm. In terms of biological role, required for maturation of urease via the functional incorporation of the urease nickel metallocenter. In Mycolicibacterium gilvum (strain PYR-GCK) (Mycobacterium gilvum (strain PYR-GCK)), this protein is Urease accessory protein UreD.